Reading from the N-terminus, the 475-residue chain is D(1B) dopamine receptor (475 aa).

At 1–38 (MLPPGRNRTAQPARLGLQRQLAQVDAPAGSATPLGPAQ) the chain is on the extracellular side. Residue Asn7 is glycosylated (N-linked (GlcNAc...) asparagine). Residues 39-64 (VVTAGLLTLLIVWTLLGNVLVCAAIV) traverse the membrane as a helical segment. Over 65 to 75 (RSRHLRAKMTN) the chain is Cytoplasmic. Residues 76 to 102 (IFIVSLAVSDLFVALLVMPWKAVAEVA) form a helical membrane-spanning segment. At 103 to 111 (GYWPFGTFC) the chain is on the extracellular side. Cysteines 111 and 211 form a disulfide. The chain crosses the membrane as a helical span at residues 112–134 (DIWVAFDIMCSTASILNLCIISV). The Cytoplasmic segment spans residues 135 to 153 (DRYWAISRPFRYERKMTQR). The chain crosses the membrane as a helical span at residues 154–179 (VALVMVGLAWTLSILISFIPVQLNWH). The Extracellular segment spans residues 180-215 (RDKAGSQGQEGLLSNGTPWEEGWELEGRTENCDSSL). Residues 216 to 240 (NRTYAISSSLISFYIPVAIMIVTYT) form a helical membrane-spanning segment. Topologically, residues 241 to 289 (RIYRIAQVQIRRISSLERAAEHAQSCRSRGAYEPDPSLRASIKKETKVF) are cytoplasmic. Residues 290 to 317 (KTLSMIMGVFVCCWLPFFILNCMVPFCS) traverse the membrane as a helical segment. Over 318–335 (SGDAEGPKTGFPCVSETT) the chain is Extracellular. Residues 336–357 (FDIFVWFGWANSSLNPIIYAFN) traverse the membrane as a helical segment. The Cytoplasmic portion of the chain corresponds to 358 to 475 (ADFRKVFAQL…LTPNCFDKTA (118 aa)). Residue Cys370 is the site of S-palmitoyl cysteine attachment. The tract at residues 415–443 (SGDREVGEEEEEGPFDHMSQISPTTPDGD) is disordered.

It belongs to the G-protein coupled receptor 1 family. Brain, in the lateral mammillary nuclei, the anterior pretectal nuclei, and several layers of the hippocampus.

It is found in the cell membrane. Functionally, dopamine receptor whose activity is mediated by G proteins which activate adenylyl cyclase. This chain is D(1B) dopamine receptor (Drd5), found in Rattus norvegicus (Rat).